We begin with the raw amino-acid sequence, 454 residues long: CCA-adding enzyme (454 aa).

ATP is bound by residues Ser59 and Arg62. Ser59 and Arg62 together coordinate CTP. The Mg(2+) site is built by Asp71, Asp73, and Asp125. ATP contacts are provided by His148, Lys167, and Tyr176. Residues His148, Lys167, and Tyr176 each coordinate CTP.

This sequence belongs to the tRNA nucleotidyltransferase/poly(A) polymerase family. Archaeal CCA-adding enzyme subfamily. Homodimer. Mg(2+) serves as cofactor.

It catalyses the reaction a tRNA precursor + 2 CTP + ATP = a tRNA with a 3' CCA end + 3 diphosphate. The catalysed reaction is a tRNA with a 3' CCA end + 2 CTP + ATP = a tRNA with a 3' CCACCA end + 3 diphosphate. In terms of biological role, catalyzes the addition and repair of the essential 3'-terminal CCA sequence in tRNAs without using a nucleic acid template. Adds these three nucleotides in the order of C, C, and A to the tRNA nucleotide-73, using CTP and ATP as substrates and producing inorganic pyrophosphate. tRNA 3'-terminal CCA addition is required both for tRNA processing and repair. Also involved in tRNA surveillance by mediating tandem CCA addition to generate a CCACCA at the 3' terminus of unstable tRNAs. While stable tRNAs receive only 3'-terminal CCA, unstable tRNAs are marked with CCACCA and rapidly degraded. This is CCA-adding enzyme from Methanosarcina acetivorans (strain ATCC 35395 / DSM 2834 / JCM 12185 / C2A).